A 194-amino-acid polypeptide reads, in one-letter code: Fe/S biogenesis protein NfuA (194 aa).

The [4Fe-4S] cluster site is built by Cys-151 and Cys-154.

The protein belongs to the NfuA family. As to quaternary structure, homodimer. [4Fe-4S] cluster serves as cofactor.

In terms of biological role, involved in iron-sulfur cluster biogenesis. Binds a 4Fe-4S cluster, can transfer this cluster to apoproteins, and thereby intervenes in the maturation of Fe/S proteins. Could also act as a scaffold/chaperone for damaged Fe/S proteins. This is Fe/S biogenesis protein NfuA from Aliivibrio fischeri (strain ATCC 700601 / ES114) (Vibrio fischeri).